A 159-amino-acid chain; its full sequence is Small ribosomal subunit protein bS6 (159 aa).

A compositionally biased stretch (basic and acidic residues) spans 93–151 (VDEHEEGPSAMMRKADRDRERDDRGPREGGFRGDREGRGDREGGGFRGDRGPRRPREDA). The segment at 93-159 (VDEHEEGPSA…DADTAAASEE (67 aa)) is disordered.

The protein belongs to the bacterial ribosomal protein bS6 family.

In terms of biological role, binds together with bS18 to 16S ribosomal RNA. This is Small ribosomal subunit protein bS6 from Rhodopseudomonas palustris (strain HaA2).